Here is a 2146-residue protein sequence, read N- to C-terminus: Phospholipid-transporting ATPase ABCA7 (2146 aa).

Residues 22–42 (PVQLLVELLWPLFLFFILVAV) form a helical membrane-spanning segment. Residues 43–549 (RHSHPPLEHH…DVFLRVLSRS (507 aa)) lie on the Extracellular side of the membrane. C75 and C225 are disulfide-bonded. N312 is a glycosylation site (N-linked (GlcNAc...) asparagine). The next 6 helical transmembrane spans lie at 550–570 (LPLF…KAVV), 593–613 (LGWF…LVLV), 626–646 (GVVF…SFLL), 655–675 (LAAA…VLCV), 687–707 (VAAS…LALL), and 727–747 (VFSL…YGLA). In terms of domain architecture, ABC transporter 1 spans 807–1038 (VSVRSLEKRF…LGSGYYLTLV (232 aa)). 841 to 848 (GHNGAGKT) contributes to the ATP binding site. The helical transmembrane segment at 849 to 869 (TTLSILSGLFPPSGGSAFILG) threads the bilayer. Residues 1048-1066 (EKADTDMEGSVDTRQEKKN) show a composition bias toward basic and acidic residues. Disordered regions lie at residues 1048 to 1072 (EKAD…QGSR) and 1185 to 1209 (TALE…DAVG). The helical transmembrane segment at 1243–1263 (IVLPALFVGLALVFSLIVPPF) threads the bilayer. The Extracellular portion of the chain corresponds to 1264-1537 (GHYPALRLSP…ALMASSVDVL (274 aa)). A disulfide bond links C1345 and C1359. 6 consecutive transmembrane segments (helical) span residues 1538-1558 (VSIC…LVLI), 1584-1604 (FLWD…IFLA), 1621-1641 (LLLL…SFFF), 1649-1669 (VVLT…TFVL), 1683-1703 (ILKQ…LIDM), and 1729-1749 (VVGK…LFTL). The region spanning 1793-2025 (LVLRNLTKVY…FAAGHTLTLR (233 aa)) is the ABC transporter 2 domain. 1827–1834 (GVNGAGKT) contributes to the ATP binding site. Residues 2104–2146 (QGKDEDTEEQKEAGVGVDPAPGLQHPKRVSQFLDDPSTAETVL) are disordered.

This sequence belongs to the ABC transporter superfamily. ABCA family. In terms of processing, N-glycosylated. Expressed in leukocytes (at protein level). Widely expressed. Highly expressed in myelo-lymphatic tissues including peripheral leukocytes, thymus, spleen and bone marrow. Expressed in the hippocampus and the cerebellum. Isoform 2: Abundant in lymph node, spleen, thymus and trachea. Isoform 1: Strongly expressed in brain and bone marrow.

It is found in the cell membrane. The protein localises to the golgi apparatus membrane. The protein resides in the early endosome membrane. Its subcellular location is the cytoplasm. It localises to the cell projection. It is found in the ruffle membrane. The protein localises to the phagocytic cup. The protein resides in the endoplasmic reticulum. It catalyses the reaction ATP + H2O + phospholipidSide 1 = ADP + phosphate + phospholipidSide 2.. It carries out the reaction a 1,2-diacyl-sn-glycero-3-phosphocholine(out) + ATP + H2O = a 1,2-diacyl-sn-glycero-3-phosphocholine(in) + ADP + phosphate + H(+). The enzyme catalyses a 1,2-diacyl-sn-glycero-3-phospho-L-serine(out) + ATP + H2O = a 1,2-diacyl-sn-glycero-3-phospho-L-serine(in) + ADP + phosphate + H(+). With respect to regulation, ATPase activity is decreased by cholesterol and ceramide. ATPase activity is stimulated by phosphatidylserine, phosphatidylcholine and sphingomyelin, but phosphatidylserine is more effective. Catalyzes the translocation of specific phospholipids from the cytoplasmic to the extracellular/lumenal leaflet of membrane coupled to the hydrolysis of ATP. Transports preferentially phosphatidylserine over phosphatidylcholine. Plays a role in lipid homeostasis and macrophage-mediated phagocytosis. Binds APOA1 and may function in apolipoprotein-mediated phospholipid efflux from cells. May also mediate cholesterol efflux. May regulate cellular ceramide homeostasis during keratinocyte differentiation. Involved in lipid raft organization and CD1D localization on thymocytes and antigen-presenting cells, which plays an important role in natural killer T-cell development and activation. Plays a role in phagocytosis of apoptotic cells by macrophages. Macrophage phagocytosis is stimulated by APOA1 or APOA2, probably by stabilization of ABCA7. Also involved in phagocytic clearance of amyloid-beta by microglia cells and macrophages. Further limits amyloid-beta production by playing a role in the regulation of amyloid-beta A4 precursor protein (APP) endocytosis and/or processing. Amyloid-beta is the main component of amyloid plaques found in the brains of Alzheimer patients. This Homo sapiens (Human) protein is Phospholipid-transporting ATPase ABCA7.